A 305-amino-acid polypeptide reads, in one-letter code: UDP-3-O-acyl-N-acetylglucosamine deacetylase (305 aa).

Residues His79, His238, and Asp242 each contribute to the Zn(2+) site. The Proton donor role is filled by His265.

This sequence belongs to the LpxC family. The cofactor is Zn(2+).

The enzyme catalyses a UDP-3-O-[(3R)-3-hydroxyacyl]-N-acetyl-alpha-D-glucosamine + H2O = a UDP-3-O-[(3R)-3-hydroxyacyl]-alpha-D-glucosamine + acetate. It functions in the pathway glycolipid biosynthesis; lipid IV(A) biosynthesis; lipid IV(A) from (3R)-3-hydroxytetradecanoyl-[acyl-carrier-protein] and UDP-N-acetyl-alpha-D-glucosamine: step 2/6. Functionally, catalyzes the hydrolysis of UDP-3-O-myristoyl-N-acetylglucosamine to form UDP-3-O-myristoylglucosamine and acetate, the committed step in lipid A biosynthesis. The protein is UDP-3-O-acyl-N-acetylglucosamine deacetylase of Vibrio campbellii (strain ATCC BAA-1116).